The primary structure comprises 352 residues: Biotin synthase (352 aa).

The 219-residue stretch at 44 to 262 folds into the Radical SAM core domain; sequence NRVQVSTLLS…LAVARIMMPK (219 aa). Residues C59, C63, and C66 each coordinate [4Fe-4S] cluster. [2Fe-2S] cluster contacts are provided by C103, C134, C194, and R266.

This sequence belongs to the radical SAM superfamily. Biotin synthase family. As to quaternary structure, homodimer. [4Fe-4S] cluster serves as cofactor. The cofactor is [2Fe-2S] cluster.

It catalyses the reaction (4R,5S)-dethiobiotin + (sulfur carrier)-SH + 2 reduced [2Fe-2S]-[ferredoxin] + 2 S-adenosyl-L-methionine = (sulfur carrier)-H + biotin + 2 5'-deoxyadenosine + 2 L-methionine + 2 oxidized [2Fe-2S]-[ferredoxin]. It participates in cofactor biosynthesis; biotin biosynthesis; biotin from 7,8-diaminononanoate: step 2/2. Its function is as follows. Catalyzes the conversion of dethiobiotin (DTB) to biotin by the insertion of a sulfur atom into dethiobiotin via a radical-based mechanism. This is Biotin synthase from Pseudomonas paraeruginosa (strain DSM 24068 / PA7) (Pseudomonas aeruginosa (strain PA7)).